We begin with the raw amino-acid sequence, 355 residues long: IgG receptor FcRn large subunit p51 (355 aa).

Residues 1-24 (MRVPRSQPWGLALLLLLLPGTLRA) form the signal peptide. The alpha-1 stretch occupies residues 25 to 111 (AESHRSLLYH…ALKVFGDRDS (87 aa)). Residues 25 to 300 (AESHRSLLYH…LESPAKSSVP (276 aa)) are Extracellular-facing. Positions 112 to 201 (YTLQGLLGCE…ERGRGNLEWK (90 aa)) are alpha-2. N-linked (GlcNAc...) asparagine glycosylation is present at N126. Positions 202-291 (EPPSMRLKAR…GPAQPLTVEL (90 aa)) are alpha-3. The 90-residue stretch at 203–292 (PPSMRLKARP…PAQPLTVELE (90 aa)) folds into the Ig-like C1-type domain. A disulfide bond links C222 and C276. The tract at residues 293 to 298 (SPAKSS) is connecting peptide. The helical transmembrane segment at 301 to 321 (VIGISIGFLLLMTVAAGGALL) threads the bilayer. The Cytoplasmic portion of the chain corresponds to 322-355 (WRRRKGLPAPWIAFRGDDIGALLPTPGLSKDAES).

It belongs to the immunoglobulin superfamily. As to quaternary structure, fcRn complex consists of two subunits: p51, and p14 which is equivalent to beta-2-microglobulin. It forms an MHC class I-like heterodimer. Interacts with albumin/ALB; this interaction regulates ALB homeostasis. In terms of tissue distribution, expressed in liver and mammary gland of non-lactating animals. Expressed in hepatocytes and in epithelial cells of portal bile ductuli. Not expressed in the brances of portal veins or hepatic arteries. Expressed in the epithelial cells of the acini and ducti in the mammary gland with expression emphasized at the apical side. Not expressed in blood vessels of mammary gland.

The protein localises to the cell membrane. It is found in the endosome membrane. In terms of biological role, cell surface receptor that transfers passive humoral immunity from the mother to the newborn. Binds to the Fc region of monomeric immunoglobulin gamma and mediates its selective uptake from milk. IgG in the milk is bound at the apical surface of the intestinal epithelium. The resultant FcRn-IgG complexes are transcytosed across the intestinal epithelium and IgG is released from FcRn into blood or tissue fluids. Throughout life, contributes to effective humoral immunity by recycling IgG and extending its half-life in the circulation. Mechanistically, monomeric IgG binding to FcRn in acidic endosomes of endothelial and hematopoietic cells recycles IgG to the cell surface where it is released into the circulation. In addition of IgG, regulates homeostasis of the other most abundant circulating protein albumin/ALB. The protein is IgG receptor FcRn large subunit p51 of Camelus dromedarius (Dromedary).